A 309-amino-acid polypeptide reads, in one-letter code: Pyrroline-5-carboxylate reductase 1, mitochondrial (309 aa).

The residue at position 2 (Ser-2) is an N-acetylserine. Residues 6-11 and Ser-34 contribute to the NADP(+) site; that span reads IGAGQL. NADPH-binding residues include Ala-8, Gln-10, Leu-11, Ser-34, Asp-36, Asn-56, Val-70, Lys-71, and Ala-97. NADP(+) contacts are provided by residues Asn-56, 69–72, and 95–97; these read AVKP and CAA. Glu-164 is an L-proline binding site. Asn-230 serves as a coordination point for NADPH. 2 residues coordinate L-proline: Ala-237 and Thr-238. Residues Ser-278 and Ser-301 each carry the phosphoserine modification.

Belongs to the pyrroline-5-carboxylate reductase family. Homodecamer; composed of 5 homodimers. Interacts with LTO1. In terms of tissue distribution, highly expressed in osteoblasts and skin.

It localises to the mitochondrion. It catalyses the reaction L-proline + NADP(+) = (S)-1-pyrroline-5-carboxylate + NADPH + 2 H(+). It carries out the reaction L-proline + NAD(+) = (S)-1-pyrroline-5-carboxylate + NADH + 2 H(+). It functions in the pathway amino-acid biosynthesis; L-proline biosynthesis; L-proline from L-glutamate 5-semialdehyde: step 1/1. Oxidoreductase that catalyzes the last step in proline biosynthesis, which corresponds to the reduction of pyrroline-5-carboxylate to L-proline using NAD(P)H. At physiologic concentrations, has higher specific activity in the presence of NADH. Involved in the cellular response to oxidative stress. The sequence is that of Pyrroline-5-carboxylate reductase 1, mitochondrial from Mus musculus (Mouse).